The sequence spans 571 residues: Proline--tRNA ligase (571 aa).

This sequence belongs to the class-II aminoacyl-tRNA synthetase family. ProS type 1 subfamily. Homodimer.

The protein resides in the cytoplasm. The catalysed reaction is tRNA(Pro) + L-proline + ATP = L-prolyl-tRNA(Pro) + AMP + diphosphate. Its function is as follows. Catalyzes the attachment of proline to tRNA(Pro) in a two-step reaction: proline is first activated by ATP to form Pro-AMP and then transferred to the acceptor end of tRNA(Pro). As ProRS can inadvertently accommodate and process non-cognate amino acids such as alanine and cysteine, to avoid such errors it has two additional distinct editing activities against alanine. One activity is designated as 'pretransfer' editing and involves the tRNA(Pro)-independent hydrolysis of activated Ala-AMP. The other activity is designated 'posttransfer' editing and involves deacylation of mischarged Ala-tRNA(Pro). The misacylated Cys-tRNA(Pro) is not edited by ProRS. In Ectopseudomonas mendocina (strain ymp) (Pseudomonas mendocina), this protein is Proline--tRNA ligase.